We begin with the raw amino-acid sequence, 1131 residues long: MSSSRPAHSSSSSSRTRQSSRARILAQTTLDAELNAEYEESGDSFDYSKLVEAQRSTPPEQQGRSGKVIAYLQHIQRGKLIQPFGCLLALDEKSFRVIAFSENAPEMLTTVSHAVPNVDDPPKLGIGTNVRSLFTDPGATALQKALGFADVSLLNPILVQCKTSGKPFYAIVHRATGCLVVDFEPVKPTEFPATAAGALQSYKLAAKAISKIQSLPGGSMEALCNTVVKEVFDLTGYDRVMAYKFHEDEHGEVFAEITKPGIEPYIGLHYPATDIPQAARFLFMKNKVRMICDCRARSVKIIEDEALSIDISLCGSTLRAPHSCHLKYMENMNSIASLVMAVVVNENEEDDEPEPEQPPQQQKKKRLWGLIVCHHESPRYVPFPLRYACEFLAQVFAVHVNKEFELEKQIREKNILRMQTMLSDMLFKESSPLSIVSGSPNIMDLVKCDGAALLYGDKVWRLQTAPTESQIRDIAFWLSEVHGDSTGLSTDSLQDAGYPGAASLGDMICGMAVAKITSKDILFWFRSHTAAEIKWGGAKHDPSDKDDNRRMHPRLSFKAFLEVVKTKSLPWSDYEMDAIHSLQLILRGTLNDASKPAQASGLDNQIGDLKLDGLAELQAVTSEMVRLMETATVPILAVDGNGLVNGWNQKVAELSGLRVDEAIGRHILTLVEDSSVSLVQRMLYLALQGREEKEVRFELKTHGSKRDDGPVILVVNACASRDLHDHVVGVCFVAQDMTVHKLVMDKFTRVEGDYKAIIHNPNPLIPPIFGADQFGWCSEWNAAMTKLTGWHRDEVVDKMLLGEVFNSSNASCLLKSKDAFVRLCIVINSALAGEEAEKASFGFFDRNEKYVECLLSVNRKVNADGVVTGVFCFIHVPSDDLQHALHVQQASEQTAQRKLKAFSYMRHAINKPLSGMLYSRETLKSTGLNEEQMRQVRVGDNCHRQLNKILADLDQDNITDKSSCLDLDMAEFVLQDVVVSAVSQVLIGCQAKGIRVACNLPERSMKQKVYGDGIRLQQIVSDFLFVSVKFSPAGGSVDISSKLTKNSIGENLHLIDFELRIKHRGAGVPAEILSQMYEEDNKEQSEEGFSLAVSRNLLRLMNGDIRHLREAGMSTFILTAELAAAPSAVGR.

The interval 1 to 23 (MSSSRPAHSSSSSSRTRQSSRAR) is disordered. The GAF domain occupies 219–404 (SMEALCNTVV…VFAVHVNKEF (186 aa)). Cysteine 324 serves as a coordination point for phytochromobilin. 2 PAS domains span residues 620 to 690 (VTSE…LQGR) and 750 to 834 (VEGD…LAGE). The Histidine kinase domain occupies 904–1124 (YMRHAINKPL…TFILTAELAA (221 aa)).

This sequence belongs to the phytochrome family. As to quaternary structure, homodimer. Post-translationally, contains one covalently linked phytochromobilin chromophore.

Its function is as follows. Regulatory photoreceptor which exists in two forms that are reversibly interconvertible by light: the Pr form that absorbs maximally in the red region of the spectrum and the Pfr form that absorbs maximally in the far-red region. Photoconversion of Pr to Pfr induces an array of morphogenic responses, whereas reconversion of Pfr to Pr cancels the induction of those responses. Pfr controls the expression of a number of nuclear genes including those encoding the small subunit of ribulose-bisphosphate carboxylase, chlorophyll A/B binding protein, protochlorophyllide reductase, rRNA, etc. It also controls the expression of its own gene(s) in a negative feedback fashion. This is Phytochrome A (PHYA1) from Zea mays (Maize).